The chain runs to 288 residues: Ice-binding protein (288 aa).

The signal sequence occupies residues 1 to 22 (MFSTTLINTFSLGLLAVVSVVA). 2 consecutive short sequence motifs (ice-binding site motif (T-A/G-X-T/N)) follow at residues 75-78 (TAGN) and 154-157 (TAFN). Residue Asn194 is glycosylated (N-linked (GlcNAc...) asparagine). 2 consecutive short sequence motifs (ice-binding site motif (T-A/G-X-T/N)) follow at residues 196–199 (TGVT) and 265–268 (TGAT).

It belongs to the ice-binding protein family.

Its subcellular location is the secreted. Functionally, binds ice crystals and most probably inhibits their growth in order to prevent cell damage from extracellular ice. This is Ice-binding protein from Lentinula edodes (Shiitake mushroom).